A 79-amino-acid polypeptide reads, in one-letter code: Acyl carrier protein (79 aa).

One can recognise a Carrier domain in the interval 3–78; that stretch reads QEILEKVCSI…DAVKFIEEKK (76 aa). An O-(pantetheine 4'-phosphoryl)serine modification is found at Ser-38.

This sequence belongs to the acyl carrier protein (ACP) family. 4'-phosphopantetheine is transferred from CoA to a specific serine of apo-ACP by AcpS. This modification is essential for activity because fatty acids are bound in thioester linkage to the sulfhydryl of the prosthetic group.

It is found in the cytoplasm. Its pathway is lipid metabolism; fatty acid biosynthesis. Its function is as follows. Carrier of the growing fatty acid chain in fatty acid biosynthesis. This is Acyl carrier protein from Prochlorococcus marinus (strain MIT 9312).